Consider the following 83-residue polypeptide: uncharacterized protein (83 aa).

A helical membrane pass occupies residues 58–80 (YWGYGAAYGISLGLIAGVALAGL).

It is found in the membrane. This is an uncharacterized protein from Bacillus subtilis (strain 168).